Here is a 429-residue protein sequence, read N- to C-terminus: 3-phosphoshikimate 1-carboxyvinyltransferase (429 aa).

3-phosphoshikimate is bound by residues Lys11, Ser12, and Arg16. Lys11 contributes to the phosphoenolpyruvate binding site. Positions 82 and 110 each coordinate phosphoenolpyruvate. 3-phosphoshikimate-binding residues include Ser155, Gln157, Asp302, and Lys329. Residue Gln157 participates in phosphoenolpyruvate binding. Asp302 serves as the catalytic Proton acceptor. The phosphoenolpyruvate site is built by Arg333 and Arg385.

The protein belongs to the EPSP synthase family. As to quaternary structure, monomer.

It is found in the cytoplasm. The enzyme catalyses 3-phosphoshikimate + phosphoenolpyruvate = 5-O-(1-carboxyvinyl)-3-phosphoshikimate + phosphate. It participates in metabolic intermediate biosynthesis; chorismate biosynthesis; chorismate from D-erythrose 4-phosphate and phosphoenolpyruvate: step 6/7. Functionally, catalyzes the transfer of the enolpyruvyl moiety of phosphoenolpyruvate (PEP) to the 5-hydroxyl of shikimate-3-phosphate (S3P) to produce enolpyruvyl shikimate-3-phosphate and inorganic phosphate. This is 3-phosphoshikimate 1-carboxyvinyltransferase from Helicobacter pylori (strain HPAG1).